We begin with the raw amino-acid sequence, 487 residues long: Aromatic-L-amino-acid decarboxylase (487 aa).

Residue M1 is modified to N-acetylmethionine. 2 consecutive repeat copies span residues 58 to 115 (EDIE…TELE) and 118 to 178 (MMDW…MQAA). A 2 X approximate tandem repeats region spans residues 58–178 (EDIEKIIMPG…AASPELMQAA (121 aa)). T82 contributes to the substrate binding site. A148 and S149 together coordinate pyridoxal 5'-phosphate. A substrate-binding site is contributed by H192. Pyridoxal 5'-phosphate-binding residues include T246 and N300. At K303 the chain carries N6-(pyridoxal phosphate)lysine.

The protein belongs to the group II decarboxylase family. In terms of assembly, homodimer. Pyridoxal 5'-phosphate is required as a cofactor.

The catalysed reaction is L-dopa + H(+) = dopamine + CO2. The enzyme catalyses 5-hydroxy-L-tryptophan + H(+) = serotonin + CO2. Its pathway is catecholamine biosynthesis; dopamine biosynthesis; dopamine from L-tyrosine: step 2/2. In terms of biological role, catalyzes the decarboxylation of L-3,4-dihydroxyphenylalanine (DOPA) to dopamine and L-5-hydroxytryptophan to serotonin. The sequence is that of Aromatic-L-amino-acid decarboxylase (DDC) from Bos taurus (Bovine).